A 447-amino-acid chain; its full sequence is ATP-dependent protease ATPase subunit HslU (447 aa).

ATP is bound by residues Ile18, 60 to 65, Asp259, Glu325, and Arg397; that span reads GVGKTE.

The protein belongs to the ClpX chaperone family. HslU subfamily. In terms of assembly, a double ring-shaped homohexamer of HslV is capped on each side by a ring-shaped HslU homohexamer. The assembly of the HslU/HslV complex is dependent on binding of ATP.

The protein resides in the cytoplasm. In terms of biological role, ATPase subunit of a proteasome-like degradation complex; this subunit has chaperone activity. The binding of ATP and its subsequent hydrolysis by HslU are essential for unfolding of protein substrates subsequently hydrolyzed by HslV. HslU recognizes the N-terminal part of its protein substrates and unfolds these before they are guided to HslV for hydrolysis. This is ATP-dependent protease ATPase subunit HslU from Burkholderia lata (strain ATCC 17760 / DSM 23089 / LMG 22485 / NCIMB 9086 / R18194 / 383).